The following is a 205-amino-acid chain: Small ribosomal subunit protein uS4 (205 aa).

The tract at residues 18 to 46 (NIWGRSKSPVNRREYGPGQHGQRRKGKLS) is disordered. The region spanning 94–157 (RRLDAVVYRA…RQMTLVLEAQ (64 aa)) is the S4 RNA-binding domain.

It belongs to the universal ribosomal protein uS4 family. Part of the 30S ribosomal subunit. Contacts protein S5. The interaction surface between S4 and S5 is involved in control of translational fidelity.

In terms of biological role, one of the primary rRNA binding proteins, it binds directly to 16S rRNA where it nucleates assembly of the body of the 30S subunit. Its function is as follows. With S5 and S12 plays an important role in translational accuracy. This Xanthobacter autotrophicus (strain ATCC BAA-1158 / Py2) protein is Small ribosomal subunit protein uS4.